The chain runs to 139 residues: AP-4 complex subunit sigma (139 aa).

This sequence belongs to the adaptor complexes small subunit family. May be part of the adaptor protein complex 4 (AP-4), a heterotetramer composed of two large adaptins (epsilon-type subunitand beta-type subunit), a medium adaptin (mu-type subunit) and a small adaptin (sigma-type).

Its subcellular location is the golgi apparatus. It is found in the trans-Golgi network membrane. Probable component of an adaptor protein complex. Adaptor protein complexes are vesicle coat components involved both in vesicle formation and cargo selection. They control the vesicular transport of proteins in different trafficking pathways. This chain is AP-4 complex subunit sigma, found in Dictyostelium discoideum (Social amoeba).